Here is a 258-residue protein sequence, read N- to C-terminus: Global transcriptional regulator CodY (258 aa).

Positions 1–156 (MSTLLSKTRR…SATIVGMELL (156 aa)) are GAF domain. The segment at residues 204 to 223 (ASKIADKVGITRSVIVNALR) is a DNA-binding region (H-T-H motif).

The protein belongs to the CodY family.

The protein resides in the cytoplasm. Its function is as follows. DNA-binding global transcriptional regulator which is involved in the adaptive response to starvation and acts by directly or indirectly controlling the expression of numerous genes in response to nutrient availability. During rapid exponential growth, CodY is highly active and represses genes whose products allow adaptation to nutrient depletion. This is Global transcriptional regulator CodY from Clostridium perfringens (strain SM101 / Type A).